The primary structure comprises 717 residues: DNA ligase (717 aa).

NAD(+) contacts are provided by residues 44–48, 93–94, and E127; these read DAEYD and SL. The active-site N6-AMP-lysine intermediate is the K129. The NAD(+) site is built by R150, E186, K302, and K326. Positions 431, 434, 455, and 461 each coordinate Zn(2+). A BRCT domain is found at 639-717; sequence TSGSPVVGKT…EDEWLELIGG (79 aa).

It belongs to the NAD-dependent DNA ligase family. LigA subfamily. Mg(2+) serves as cofactor. It depends on Mn(2+) as a cofactor.

The enzyme catalyses NAD(+) + (deoxyribonucleotide)n-3'-hydroxyl + 5'-phospho-(deoxyribonucleotide)m = (deoxyribonucleotide)n+m + AMP + beta-nicotinamide D-nucleotide.. Functionally, DNA ligase that catalyzes the formation of phosphodiester linkages between 5'-phosphoryl and 3'-hydroxyl groups in double-stranded DNA using NAD as a coenzyme and as the energy source for the reaction. It is essential for DNA replication and repair of damaged DNA. This Rhizobium rhizogenes (strain K84 / ATCC BAA-868) (Agrobacterium radiobacter) protein is DNA ligase.